The chain runs to 629 residues: tRNA uridine 5-carboxymethylaminomethyl modification enzyme MnmG (629 aa).

FAD contacts are provided by residues 14–19 (GAGHAG), valine 126, and serine 181. Residue 273 to 287 (GPRYCPSIEDKVVRF) participates in NAD(+) binding. FAD is bound at residue glutamine 370.

It belongs to the MnmG family. In terms of assembly, homodimer. Heterotetramer of two MnmE and two MnmG subunits. FAD serves as cofactor.

Its subcellular location is the cytoplasm. Its function is as follows. NAD-binding protein involved in the addition of a carboxymethylaminomethyl (cmnm) group at the wobble position (U34) of certain tRNAs, forming tRNA-cmnm(5)s(2)U34. The protein is tRNA uridine 5-carboxymethylaminomethyl modification enzyme MnmG of Bacillus thuringiensis (strain Al Hakam).